A 140-amino-acid polypeptide reads, in one-letter code: Transcription antitermination protein NusB (140 aa).

This sequence belongs to the NusB family.

In terms of biological role, involved in transcription antitermination. Required for transcription of ribosomal RNA (rRNA) genes. Binds specifically to the boxA antiterminator sequence of the ribosomal RNA (rrn) operons. The chain is Transcription antitermination protein NusB from Elusimicrobium minutum (strain Pei191).